A 281-amino-acid chain; its full sequence is Shikimate dehydrogenase (NADP(+)) (281 aa).

Residues 20-22 (SRS) and Thr-67 each bind shikimate. The Proton acceptor role is filled by Lys-71. Asp-83 lines the NADP(+) pocket. Residues Asn-92 and Asp-108 each coordinate shikimate. Residues 133–137 (GAGGA), 157–162 (NRTEAR), and Met-225 each bind NADP(+). Tyr-227 lines the shikimate pocket. Gly-248 provides a ligand contact to NADP(+).

This sequence belongs to the shikimate dehydrogenase family. Homodimer.

It carries out the reaction shikimate + NADP(+) = 3-dehydroshikimate + NADPH + H(+). Its pathway is metabolic intermediate biosynthesis; chorismate biosynthesis; chorismate from D-erythrose 4-phosphate and phosphoenolpyruvate: step 4/7. Functionally, involved in the biosynthesis of the chorismate, which leads to the biosynthesis of aromatic amino acids. Catalyzes the reversible NADPH linked reduction of 3-dehydroshikimate (DHSA) to yield shikimate (SA). This Paracidovorax citrulli (strain AAC00-1) (Acidovorax citrulli) protein is Shikimate dehydrogenase (NADP(+)).